Consider the following 314-residue polypeptide: DNA-directed RNA polymerase subunit alpha (314 aa).

Positions 1-227 are alpha N-terminal domain (alpha-NTD); it reads MTYFQIECVE…SLFYPLTNLN (227 aa). Residues 239 to 314 form an alpha C-terminal domain (alpha-CTD) region; that stretch reads EEEINQVLIE…LPKEKNIQNT (76 aa).

This sequence belongs to the RNA polymerase alpha chain family. As to quaternary structure, in plastids the minimal PEP RNA polymerase catalytic core is composed of four subunits: alpha, beta, beta', and beta''. When a (nuclear-encoded) sigma factor is associated with the core the holoenzyme is formed, which can initiate transcription.

The protein resides in the plastid. Its subcellular location is the chloroplast. It catalyses the reaction RNA(n) + a ribonucleoside 5'-triphosphate = RNA(n+1) + diphosphate. DNA-dependent RNA polymerase catalyzes the transcription of DNA into RNA using the four ribonucleoside triphosphates as substrates. This chain is DNA-directed RNA polymerase subunit alpha, found in Gracilaria tenuistipitata var. liui (Red alga).